The following is a 299-amino-acid chain: ATP phosphoribosyltransferase (299 aa).

It belongs to the ATP phosphoribosyltransferase family. Long subfamily. As to quaternary structure, equilibrium between an active dimeric form, an inactive hexameric form and higher aggregates. Interconversion between the various forms is largely reversible and is influenced by the natural substrates and inhibitors of the enzyme. Mg(2+) is required as a cofactor.

Its subcellular location is the cytoplasm. It carries out the reaction 1-(5-phospho-beta-D-ribosyl)-ATP + diphosphate = 5-phospho-alpha-D-ribose 1-diphosphate + ATP. It functions in the pathway amino-acid biosynthesis; L-histidine biosynthesis; L-histidine from 5-phospho-alpha-D-ribose 1-diphosphate: step 1/9. Feedback inhibited by histidine. In terms of biological role, catalyzes the condensation of ATP and 5-phosphoribose 1-diphosphate to form N'-(5'-phosphoribosyl)-ATP (PR-ATP). Has a crucial role in the pathway because the rate of histidine biosynthesis seems to be controlled primarily by regulation of HisG enzymatic activity. The chain is ATP phosphoribosyltransferase from Buchnera aphidicola subsp. Diuraphis noxia.